The following is a 235-amino-acid chain: Large ribosomal subunit protein uL1 (235 aa).

The protein belongs to the universal ribosomal protein uL1 family. Part of the 50S ribosomal subunit.

Its function is as follows. Binds directly to 23S rRNA. The L1 stalk is quite mobile in the ribosome, and is involved in E site tRNA release. Protein L1 is also a translational repressor protein, it controls the translation of the L11 operon by binding to its mRNA. The protein is Large ribosomal subunit protein uL1 of Pseudarthrobacter chlorophenolicus (strain ATCC 700700 / DSM 12829 / CIP 107037 / JCM 12360 / KCTC 9906 / NCIMB 13794 / A6) (Arthrobacter chlorophenolicus).